A 71-amino-acid polypeptide reads, in one-letter code: Large ribosomal subunit protein bL31 (71 aa).

Residues Cys-16, Cys-18, Cys-38, and Cys-41 each contribute to the Zn(2+) site.

The protein belongs to the bacterial ribosomal protein bL31 family. Type A subfamily. Part of the 50S ribosomal subunit. Zn(2+) serves as cofactor.

Binds the 23S rRNA. The polypeptide is Large ribosomal subunit protein bL31 (Neisseria meningitidis serogroup A / serotype 4A (strain DSM 15465 / Z2491)).